The chain runs to 468 residues: Uronate isomerase (468 aa).

This sequence belongs to the metallo-dependent hydrolases superfamily. Uronate isomerase family.

It catalyses the reaction D-glucuronate = D-fructuronate. It carries out the reaction aldehydo-D-galacturonate = keto-D-tagaturonate. It functions in the pathway carbohydrate metabolism; pentose and glucuronate interconversion. The chain is Uronate isomerase from Lachnospira eligens (strain ATCC 27750 / DSM 3376 / VPI C15-48 / C15-B4) (Eubacterium eligens).